We begin with the raw amino-acid sequence, 220 residues long: MKTGALTTFLALCLPVTVFATTLRLSNEVDLLVLDGKKVSSSLLRGAESIELENGPHQLVFRVEKTIRLPGNEERLYISPPLVISFDTQLISQVNFQLPRLENEREASHFNAAPRLALLDGDAMPIPVKLDILAITSTAKVVDYEIETERYNKSAKRASLPQFATMMADDSTLLSDVSELDTVPPQSQTLTEQRLKYWFRLADPQTRHHFLQWAEKQPPS.

Positions 1-20 (MKTGALTTFLALCLPVTVFA) are cleaved as a signal peptide.

The protein belongs to the UPF0319 family.

This is UPF0319 protein YccT from Salmonella choleraesuis (strain SC-B67).